The following is a 729-amino-acid chain: Fatty acid oxidation complex subunit alpha (729 aa).

Residues methionine 1–alanine 189 form an enoyl-CoA hydratase/isomerase region. Residue aspartate 296 participates in substrate binding. Positions proline 311–alanine 729 are 3-hydroxyacyl-CoA dehydrogenase. Residues methionine 324, aspartate 343, valine 400 to glutamate 402, lysine 407, and serine 429 each bind NAD(+). Histidine 450 acts as the For 3-hydroxyacyl-CoA dehydrogenase activity in catalysis. Residue asparagine 453 coordinates NAD(+). Positions 500 and 660 each coordinate substrate.

The protein in the N-terminal section; belongs to the enoyl-CoA hydratase/isomerase family. This sequence in the C-terminal section; belongs to the 3-hydroxyacyl-CoA dehydrogenase family. In terms of assembly, heterotetramer of two alpha chains (FadB) and two beta chains (FadA).

The catalysed reaction is a (3S)-3-hydroxyacyl-CoA + NAD(+) = a 3-oxoacyl-CoA + NADH + H(+). The enzyme catalyses a (3S)-3-hydroxyacyl-CoA = a (2E)-enoyl-CoA + H2O. It catalyses the reaction a 4-saturated-(3S)-3-hydroxyacyl-CoA = a (3E)-enoyl-CoA + H2O. It carries out the reaction (3S)-3-hydroxybutanoyl-CoA = (3R)-3-hydroxybutanoyl-CoA. The catalysed reaction is a (3Z)-enoyl-CoA = a 4-saturated (2E)-enoyl-CoA. The enzyme catalyses a (3E)-enoyl-CoA = a 4-saturated (2E)-enoyl-CoA. Its pathway is lipid metabolism; fatty acid beta-oxidation. Involved in the aerobic and anaerobic degradation of long-chain fatty acids via beta-oxidation cycle. Catalyzes the formation of 3-oxoacyl-CoA from enoyl-CoA via L-3-hydroxyacyl-CoA. It can also use D-3-hydroxyacyl-CoA and cis-3-enoyl-CoA as substrate. The protein is Fatty acid oxidation complex subunit alpha of Pectobacterium atrosepticum (strain SCRI 1043 / ATCC BAA-672) (Erwinia carotovora subsp. atroseptica).